A 439-amino-acid polypeptide reads, in one-letter code: Probable non-inhibitory serpin-Z9 (439 aa).

The segment at 12–44 (RRPPFPAGDANHRRLSSAPAPKPEAPAEAMPPP) is disordered. Positions 31 to 44 (APKPEAPAEAMPPP) are enriched in pro residues. Positions 389 to 413 (GIEETSVSMGLGKPLPAQHFKADHP) are RCL.

The protein belongs to the serpin family.

The chain is Probable non-inhibitory serpin-Z9 from Oryza sativa subsp. japonica (Rice).